The primary structure comprises 545 residues: DNA-binding protein REPIN1 (545 aa).

The tract at residues 1–50 is disordered; that stretch reads MLEQRCRGPTAMGPAQPWLFSGPSQESSQPDRGLRYQGKSAQPRGQTPGK. At Ser-27 the chain carries Phosphoserine. The residue at position 39 (Lys-39) is an N6-acetyllysine. Residues 52-74 form a C2H2-type 1; atypical zinc finger; sequence HRCAHCRKRFPGWVALWLHARRC. 2 consecutive C2H2-type zinc fingers follow at residues 80–102 and 111–133; these read LPCHECNQRFRHAPFLALHLQVH and FICHLCGHSFRGWVALVLHLRAH. Residues 140–162 form a C2H2-type 4; atypical zinc finger; the sequence is ITCPECDRRFWRQKQLRAHLRRC. 11 C2H2-type zinc fingers span residues 172 to 194, 229 to 251, 257 to 279, 285 to 307, 353 to 375, 381 to 403, 409 to 431, 437 to 459, 465 to 487, 493 to 515, and 521 to 543; these read FICGNCGRSFAQWDQLVVHKRVH, FQCACCGKRFRHKPNLIAHRRVH, HQCPECGKRFTNKPYLTSHRRIH, YPCTECGRRFRHKPNLLSHSKIH, HSCSDCGRSFRLERFLRLHQRQH, FACTECGKNFGKKTHLVAHSRVH, FACEECGRRFSQGSHLAAHRRDH, FVCPDCGKAFRHKPYLAAHRRIH, YVCPDCGKAFSQKSNLVSHRRIH, YACPDCDRSFSQKSNLITHRKSH, and FCCAICGQTFDDEDRLLMHQKKH. Lys-269 carries the N6-acetyllysine modification.

In terms of assembly, homodimers and homomultimers. Found in a complex with RIP60 and RIP100.

The protein resides in the nucleus. It localises to the cytoplasm. It is found in the cytosol. Functionally, sequence-specific double-stranded DNA-binding protein. Binds ATT-rich and T-rich DNA sequences and facilitates DNA bending. May regulate the expression of genes involved in cellular fatty acid import, including SCARB1/CD36, and genes involved in lipid droplet formation. May regulate the expression of LCN2, and thereby influence iron metabolism and apoptosis-related pathways. May regulate the expression of genes involved in glucose transport. The sequence is that of DNA-binding protein REPIN1 (Repin1) from Mus musculus (Mouse).